The chain runs to 365 residues: U-box domain-containing protein 56 (365 aa).

The stretch at 176–281 (YEEQRRRLEI…ELLRALEKGE (106 aa)) forms a coiled coil. Residues 293-365 (EPPQCFICPI…AIKDWLQQHP (73 aa)) form the U-box domain.

The catalysed reaction is S-ubiquitinyl-[E2 ubiquitin-conjugating enzyme]-L-cysteine + [acceptor protein]-L-lysine = [E2 ubiquitin-conjugating enzyme]-L-cysteine + N(6)-ubiquitinyl-[acceptor protein]-L-lysine.. It functions in the pathway protein modification; protein ubiquitination. Functions as an E3 ubiquitin ligase. The chain is U-box domain-containing protein 56 (PUB56) from Arabidopsis thaliana (Mouse-ear cress).